The chain runs to 680 residues: WD repeat-containing protein 48 homolog (680 aa).

8 WD repeats span residues 26 to 65 (QHRN…SEKY), 71 to 110 (HHND…CMST), 113 to 152 (THRD…ALTA), 164 to 203 (GSKD…RSMK), 206 to 245 (GHTE…CVQT), 248 to 287 (VHKE…NKTL), 290 to 329 (EEQA…RCTM), and 350 to 389 (KGGA…KKEQ). The tract at residues 592–616 (ETTPSGGNANNSLQNSQSDANSEGS) is disordered.

Belongs to the WD repeat WDR48 family. As to quaternary structure, catalytic component of the Usp12-46 deubiquitylase complex consisting of Usp12-46, Wdr20 and Uaf1; regulatory subunit that, together wtih Wdr20, stabilizes Usp12-46. The Usp12-46 deubiquitylase complex associates with arr/arrow; the interaction leads to deubiquitination and stabilization of arr/arrow.

In terms of biological role, regulatory component of the Usp12-46 deubiquitylase complex. activates deubiquitination by increasing the catalytic turnover without increasing the affinity of deubiquitinating enzymes for the substrate. The complex deubiquitylates the wg/wingless-signaling receptor arr/arrow, which stabilizes the receptor and increases its concentration at the cell surface; this enhances the sensitivity of cells to wg/wingless-signal stimulation. This increases the amplitude and spatial range of the signaling response to the wg/wingless morphogen gradient, facilitating the precise concentration-dependent regulation of its target genes. Together with Wdr20 and Usp12-46 required for wg/wingless-mediated signaling in the wing imaginal disc and for wg/wingless-dependent regulation of intestinal stem cell proliferation. The protein is WD repeat-containing protein 48 homolog of Drosophila erecta (Fruit fly).